Here is a 204-residue protein sequence, read N- to C-terminus: uncharacterized protein (204 aa).

4 helical membrane-spanning segments follow: residues Ala21 to Phe50, Phe92 to Phe114, Leu150 to Ile172, and Leu176 to Leu198.

Its subcellular location is the cell membrane. This is an uncharacterized protein from Aquifex aeolicus (strain VF5).